A 61-amino-acid polypeptide reads, in one-letter code: Double gene block protein 1 (61 aa).

The tract at residues 15-45 (LAGNRGKQKTRRSVAKDAIRKPASDSTNGGN) is disordered. Residues 17 to 35 (GNRGKQKTRRSVAKDAIRK) are RNA-binding. Residues 28–37 (VAKDAIRKPA) are compositionally biased toward basic and acidic residues.

The protein belongs to the carmovirus double gene block protein 1 family. In terms of assembly, homodimer.

Its function is as follows. Cell-to-cell movement. Displays RNA-binding activity. This Carnation mottle virus (isolate China/Shanghai) (CarMV) protein is Double gene block protein 1.